An 894-amino-acid polypeptide reads, in one-letter code: Alanine--tRNA ligase (894 aa).

Belongs to the class-II aminoacyl-tRNA synthetase family.

It localises to the cytoplasm. The enzyme catalyses tRNA(Ala) + L-alanine + ATP = L-alanyl-tRNA(Ala) + AMP + diphosphate. Functionally, catalyzes the attachment of alanine to tRNA(Ala) in a two-step reaction: alanine is first activated by ATP to form Ala-AMP and then transferred to the acceptor end of tRNA(Ala). Also edits incorrectly charged Ser-tRNA(Ala) and Gly-tRNA(Ala) via its editing domain. This is Alanine--tRNA ligase (alaS) from Leuconostoc citreum (strain KM20).